Consider the following 95-residue polypeptide: MNLKKVKRIIDMFFKEKNLNELTLAFKRPLIVSENEYNELVGRPNLSFVDKDPWVLSDEFVYYELSNTLVKLIIYYFKEKGFIHILEIDLFREKR.

This is an uncharacterized protein from Sulfolobus islandicus rod-shaped virus 1 (SIRV-1).